Consider the following 348-residue polypeptide: Phenylalanine--tRNA ligase alpha subunit (348 aa).

Glutamate 259 contacts Mg(2+).

The protein belongs to the class-II aminoacyl-tRNA synthetase family. Phe-tRNA synthetase alpha subunit type 1 subfamily. In terms of assembly, tetramer of two alpha and two beta subunits. It depends on Mg(2+) as a cofactor.

It localises to the cytoplasm. The catalysed reaction is tRNA(Phe) + L-phenylalanine + ATP = L-phenylalanyl-tRNA(Phe) + AMP + diphosphate + H(+). This is Phenylalanine--tRNA ligase alpha subunit from Limosilactobacillus reuteri (strain DSM 20016) (Lactobacillus reuteri).